The sequence spans 245 residues: Biosynthetic peptidoglycan transglycosylase (245 aa).

The chain crosses the membrane as a helical span at residues 10–30 (FLALLFVVATLAQLWYLGQVL). Residues 224-245 (DPGTVPLPPPPEPTAPPEGNTQ) form a disordered region. Residues 226–239 (GTVPLPPPPEPTAP) are compositionally biased toward pro residues.

Belongs to the glycosyltransferase 51 family.

The protein resides in the cell inner membrane. The catalysed reaction is [GlcNAc-(1-&gt;4)-Mur2Ac(oyl-L-Ala-gamma-D-Glu-L-Lys-D-Ala-D-Ala)](n)-di-trans,octa-cis-undecaprenyl diphosphate + beta-D-GlcNAc-(1-&gt;4)-Mur2Ac(oyl-L-Ala-gamma-D-Glu-L-Lys-D-Ala-D-Ala)-di-trans,octa-cis-undecaprenyl diphosphate = [GlcNAc-(1-&gt;4)-Mur2Ac(oyl-L-Ala-gamma-D-Glu-L-Lys-D-Ala-D-Ala)](n+1)-di-trans,octa-cis-undecaprenyl diphosphate + di-trans,octa-cis-undecaprenyl diphosphate + H(+). The protein operates within cell wall biogenesis; peptidoglycan biosynthesis. Its function is as follows. Peptidoglycan polymerase that catalyzes glycan chain elongation from lipid-linked precursors. This is Biosynthetic peptidoglycan transglycosylase from Alcanivorax borkumensis (strain ATCC 700651 / DSM 11573 / NCIMB 13689 / SK2).